Reading from the N-terminus, the 691-residue chain is Protein vreteno (691 aa).

Residues 128-155 (QKEREITSDPVTSTEPMPTPGPAISATE) are disordered. Tudor domains are found at residues 366 to 427 (KLQS…LAGL) and 573 to 630 (APPI…FIFP).

Interacts with aub and piwi. As to expression, gonad-specific.

The protein localises to the cytoplasm. The protein resides in the cytoplasmic ribonucleoprotein granule. Functionally, gonad-specific protein essential for germline development to repress transposable elements and preventing their mobilization, which is essential for the germline integrity. Acts via the piRNA metabolic process in both germline and somatic gonadal tissues by mediating the repression of transposable elements during meiosis. Required for primary piRNA biogenesis in both germline and somatic gonadal tissues. The protein is Protein vreteno (vret) of Drosophila melanogaster (Fruit fly).